A 230-amino-acid polypeptide reads, in one-letter code: NAD(P)H-hydrate epimerase (230 aa).

The region spanning 11-218 is the YjeF N-terminal domain; the sequence is AIDVDQELFT…ALQRKYELNL (208 aa). 61-65 provides a ligand contact to (6S)-NADPHX; that stretch reads NNGGD. N62 and D126 together coordinate K(+). Residues 130–136 and D159 each bind (6S)-NADPHX; that span reads GFSFKPP. Position 162 (S162) interacts with K(+).

The protein belongs to the NnrE/AIBP family. Requires K(+) as cofactor.

It carries out the reaction (6R)-NADHX = (6S)-NADHX. It catalyses the reaction (6R)-NADPHX = (6S)-NADPHX. Catalyzes the epimerization of the S- and R-forms of NAD(P)HX, a damaged form of NAD(P)H that is a result of enzymatic or heat-dependent hydration. This is a prerequisite for the S-specific NAD(P)H-hydrate dehydratase to allow the repair of both epimers of NAD(P)HX. The protein is NAD(P)H-hydrate epimerase of Drosophila erecta (Fruit fly).